Consider the following 144-residue polypeptide: Transcriptional regulator MraZ (144 aa).

SpoVT-AbrB domains lie at 4 to 47 (EYKN…TADK) and 77 to 120 (AQEI…DLKQ).

This sequence belongs to the MraZ family. In terms of assembly, forms oligomers.

Its subcellular location is the cytoplasm. It is found in the nucleoid. The polypeptide is Transcriptional regulator MraZ (Treponema denticola (strain ATCC 35405 / DSM 14222 / CIP 103919 / JCM 8153 / KCTC 15104)).